The primary structure comprises 33 residues: Photosystem II reaction center protein Psb30 (33 aa).

The helical transmembrane segment at 5-25 (LIVQLGSLALITVAGPAIIVL) threads the bilayer.

It belongs to the Psb30/Ycf12 family. In terms of assembly, PSII is composed of 1 copy each of membrane proteins PsbA, PsbB, PsbC, PsbD, PsbE, PsbF, PsbH, PsbI, PsbJ, PsbK, PsbL, PsbM, PsbT, PsbY, PsbZ, Psb30/Ycf12, peripheral proteins of the oxygen-evolving complex and a large number of cofactors. It forms dimeric complexes.

The protein localises to the plastid. The protein resides in the chloroplast thylakoid membrane. Functionally, a core subunit of photosystem II (PSII), probably helps stabilize the reaction center. The polypeptide is Photosystem II reaction center protein Psb30 (Euglena stellata).